The primary structure comprises 235 residues: Sugar fermentation stimulation protein homolog (235 aa).

It belongs to the SfsA family.

The sequence is that of Sugar fermentation stimulation protein homolog from Pseudomonas aeruginosa (strain ATCC 15692 / DSM 22644 / CIP 104116 / JCM 14847 / LMG 12228 / 1C / PRS 101 / PAO1).